The chain runs to 152 residues: Phospholipase A2 pkP2 (152 aa).

The first 21 residues, 1–21 (MNPAHLLVLLAVCVSLLGASA), serve as a signal peptide directing secretion. A propeptide spanning residues 22–27 (IPPLPL) is cleaved from the precursor. 7 cysteine pairs are disulfide-bonded: Cys-38-Cys-104, Cys-54-Cys-151, Cys-56-Cys-72, Cys-71-Cys-132, Cys-78-Cys-125, Cys-88-Cys-118, and Cys-111-Cys-123. Ca(2+) contacts are provided by Tyr-55, Gly-57, and Gly-59. His-75 is an active-site residue. A Ca(2+)-binding site is contributed by Asp-76. Residue Asp-126 is part of the active site.

The protein belongs to the phospholipase A2 family. Group I subfamily. Requires Ca(2+) as cofactor.

It localises to the secreted. The enzyme catalyses a 1,2-diacyl-sn-glycero-3-phosphocholine + H2O = a 1-acyl-sn-glycero-3-phosphocholine + a fatty acid + H(+). Functionally, PA2 catalyzes the calcium-dependent hydrolysis of the 2-acyl groups in 3-sn-phosphoglycerides. The polypeptide is Phospholipase A2 pkP2 (Laticauda semifasciata (Black-banded sea krait)).